Here is a 121-residue protein sequence, read N- to C-terminus: Large ribosomal subunit protein eL18 (121 aa).

It belongs to the eukaryotic ribosomal protein eL18 family.

This chain is Large ribosomal subunit protein eL18, found in Methanothermobacter thermautotrophicus (strain ATCC 29096 / DSM 1053 / JCM 10044 / NBRC 100330 / Delta H) (Methanobacterium thermoautotrophicum).